Consider the following 151-residue polypeptide: D-aminoacyl-tRNA deacylase (151 aa).

Positions 137 to 138 (GP) match the Gly-cisPro motif, important for rejection of L-amino acids motif.

It belongs to the DTD family. In terms of assembly, homodimer.

The protein resides in the cytoplasm. It carries out the reaction glycyl-tRNA(Ala) + H2O = tRNA(Ala) + glycine + H(+). The enzyme catalyses a D-aminoacyl-tRNA + H2O = a tRNA + a D-alpha-amino acid + H(+). An aminoacyl-tRNA editing enzyme that deacylates mischarged D-aminoacyl-tRNAs. Also deacylates mischarged glycyl-tRNA(Ala), protecting cells against glycine mischarging by AlaRS. Acts via tRNA-based rather than protein-based catalysis; rejects L-amino acids rather than detecting D-amino acids in the active site. By recycling D-aminoacyl-tRNA to D-amino acids and free tRNA molecules, this enzyme counteracts the toxicity associated with the formation of D-aminoacyl-tRNA entities in vivo and helps enforce protein L-homochirality. The polypeptide is D-aminoacyl-tRNA deacylase (Acaryochloris marina (strain MBIC 11017)).